The following is a 448-amino-acid chain: uncharacterized protein (448 aa).

The Extracellular segment spans residues 1–50; sequence MAPEIFVKFKCASRDIKLLWASVFLRLLSYGLTNQVLTLFLNAINMTEDK. The helical transmembrane segment at 51-71 threads the bilayer; that stretch reads IGLFMSLTLAGDVICSYILTW. Topologically, residues 72-93 are cytoplasmic; the sequence is YADSWGRRRVLVYGCAMMLLSG. Residues 94 to 114 traverse the membrane as a helical segment; the sequence is LVFSFSENFTLLLVFAIFGVI. The Extracellular portion of the chain corresponds to 115–146; the sequence is SPSSDEVGPFKSIEEAMIAHLSPHNARPEIYA. The helical transmembrane segment at 147–167 threads the bilayer; it reads IHALVGTIGSALGAIICGIFV. Residues 168–184 are Cytoplasmic-facing; it reads DLLKRTGLAATDLQCYK. Residues 185-205 traverse the membrane as a helical segment; sequence LVFLLYAFFAFCKMVIMLLLS. Topologically, residues 206 to 260 are extracellular; that stretch reads DATELDGHYEHTDCNEETAEPLDVNDETAPLMRQATHPEERSNKLSKETVSVLMK. Residues 261–281 traverse the membrane as a helical segment; it reads LLVIFMVDSLGSGFMTSGWMV. Over 282 to 287 the chain is Cytoplasmic; sequence YYYSKQ. The helical transmembrane segment at 288-308 threads the bilayer; it reads FLMGSLALGTLFFITQLVMAS. Residues 309–333 are Extracellular-facing; the sequence is STIPSSIIARCFGPVRATLLVQIPS. The chain crosses the membrane as a helical span at residues 334 to 354; that stretch reads GIFSILIPMAKNYLPLSILFL. The Cytoplasmic portion of the chain corresponds to 355-386; that stretch reads NLHFATTAMDVTPRQILLTNIIKPRDLTKVMG. 386–393 is a binding site for ATP; the sequence is GVVNIGKT. Residues 387-407 traverse the membrane as a helical segment; sequence VVNIGKTFARCVGPIFTGILA. The Extracellular segment spans residues 408–416; sequence NNNYLWLCY. Residues 417-437 form a helical membrane-spanning segment; it reads IISGSLVITADLILACMFLGV. Topologically, residues 438–448 are cytoplasmic; sequence DAKIKKQMNRH.

It is found in the membrane. This is an uncharacterized protein from Saccharomyces cerevisiae (strain ATCC 204508 / S288c) (Baker's yeast).